Consider the following 143-residue polypeptide: Protein SLC31A2 (143 aa).

The Extracellular segment spans residues 1-22; the sequence is MAMHFIFSDTAVLLFDFWSVHS. The helical transmembrane segment at 23 to 43 threads the bilayer; the sequence is PAGMALSVLVLLLLAVLYEGI. The Cytoplasmic segment spans residues 44–93; it reads KVGKAKLLNQVLVNLPTSISQQTIAETDGDSAGSDSFPVGRTHHRWYLCH. Phosphoserine is present on serine 77. The helical transmembrane segment at 94–114 threads the bilayer; sequence FGQSLIHVIQVVIGYFIMLAV. At 115–119 the chain is on the extracellular side; that stretch reads MSYNT. The chain crosses the membrane as a helical span at residues 120–140; that stretch reads WIFLGVVLGSAVGYYLAYPLL. The Cytoplasmic segment spans residues 141 to 143; the sequence is STA.

It belongs to the copper transporter (Ctr) (TC 1.A.56) family. SLC31A subfamily. In terms of assembly, oligomer. Interacts with SLC31A1; this interaction stabilizes SLC31A2 and protects it from ubiquitination and the subsequent degradation. In terms of processing, ubiquitinated; ubiquitination and the subsequent proteasomal degradation are prevent by SLC31A1 that stabilizes it. In terms of tissue distribution, ubiquitous with high expression in placenta and heart.

It is found in the membrane. Its subcellular location is the cytoplasmic vesicle membrane. The protein resides in the late endosome membrane. The protein localises to the lysosome membrane. Functionally, does not function as a copper(1+) importer in vivo. However, in vitro functions as a low-affinity copper(1+) importer. Regulator of SLC31A1 which facilitates the cleavage of the SLC31A1 ecto-domain or which stabilizes the truncated form of SLC31A1 (Truncated CTR1 form), thereby drives the SLC31A1 truncated form-dependent endosomal copper export and modulates the copper and cisplatin accumulation via SLC31A1. The polypeptide is Protein SLC31A2 (Homo sapiens (Human)).